Here is a 300-residue protein sequence, read N- to C-terminus: uncharacterized protein (300 aa).

Residues 10-67 (FDLNLLVIFECIYQHLSISKAAESLYITPSAVSQSLQRLRAQFNDPLFIRSGKGIAPT) enclose the HTH lysR-type domain. A DNA-binding region (H-T-H motif) is located at residues 27–46 (ISKAAESLYITPSAVSQSLQ).

This sequence belongs to the LysR transcriptional regulatory family.

This is an uncharacterized protein from Escherichia coli (strain K12).